A 370-amino-acid polypeptide reads, in one-letter code: Cytoplasmic dynein intermediate light chain DYN3 (370 aa).

It belongs to the dynein light intermediate chain DYN3 family. As to quaternary structure, the cytoplasmic dynein is composed of at least two heavy chains and a number of intermediate and light chains.

The protein resides in the cytoplasm. Its subcellular location is the cytoskeleton. Its function is as follows. Component of the cytoplasmic dynein which acts as a motor for the intracellular retrograde motility of vesicles and organelles along microtubules. May play an important role in the proper orientation of the mitotic spindle into the budding daughter cell yeast. Probably required for normal progression of the cell cycle. The protein is Cytoplasmic dynein intermediate light chain DYN3 (DYN3) of Kluyveromyces lactis (strain ATCC 8585 / CBS 2359 / DSM 70799 / NBRC 1267 / NRRL Y-1140 / WM37) (Yeast).